The sequence spans 57 residues: Preprotein translocase subunit SecG (57 aa).

The Cytoplasmic portion of the chain corresponds to 1–33 (MARRRKYEGLNPFVAAGLIKFSEEGELERIKLN). The helical transmembrane segment at 34-55 (PRTAILVSITVIIAILVLNILH) threads the bilayer. Topologically, residues 56–57 (PL) are extracellular.

The protein belongs to the SEC61-beta family. In terms of assembly, component of the protein translocase complex. Heterotrimer consisting of alpha (SecY), beta (SecG) and gamma (SecE) subunits. Can form oligomers of the heterotrimer.

The protein resides in the cell membrane. Functionally, involved in protein export. The function of the beta subunit is unknown, but it may be involved in stabilization of the trimeric complex. The polypeptide is Preprotein translocase subunit SecG (Pyrobaculum islandicum (strain DSM 4184 / JCM 9189 / GEO3)).